The chain runs to 624 residues: 1-deoxy-D-xylulose-5-phosphate synthase (624 aa).

Thiamine diphosphate is bound by residues His-80 and 121–123 (GHS). Mg(2+) is bound at residue Asp-152. Thiamine diphosphate contacts are provided by residues 153–154 (GA), Asn-181, Tyr-288, and Glu-370. Position 181 (Asn-181) interacts with Mg(2+).

The protein belongs to the transketolase family. DXPS subfamily. In terms of assembly, homodimer. Mg(2+) serves as cofactor. The cofactor is thiamine diphosphate.

It carries out the reaction D-glyceraldehyde 3-phosphate + pyruvate + H(+) = 1-deoxy-D-xylulose 5-phosphate + CO2. It participates in metabolic intermediate biosynthesis; 1-deoxy-D-xylulose 5-phosphate biosynthesis; 1-deoxy-D-xylulose 5-phosphate from D-glyceraldehyde 3-phosphate and pyruvate: step 1/1. Functionally, catalyzes the acyloin condensation reaction between C atoms 2 and 3 of pyruvate and glyceraldehyde 3-phosphate to yield 1-deoxy-D-xylulose-5-phosphate (DXP). The sequence is that of 1-deoxy-D-xylulose-5-phosphate synthase from Proteus mirabilis (strain HI4320).